The following is a 368-amino-acid chain: MNDETTPANKNPEKAELRCGWTTGACATAATKAALTALITGEFPDPVGIILPKGEVPYFQLAYEGLGEGYAMAGIVKDAGDDPDVTHGATIISTVYPAPPGTGIIFRAGEGVGTVTREGLAIPPGEAAINPVPRRMMTEICEAICAEYGLPADLVITISVPGGEEIAQKTWNPRLGIIGGISILGTTGVVHPFSCSAWIHSIHRGIDVARAAGQKHVLGATGSTSEDAAQALYNLPDFAILDMGDFAGGVLKYLREHPIDRLTIAGGFAKLTKLAQGALDLHSSRSQVDKGFLWQIAERAGAPAGMKERILLANTAMEVLELTQSIGIDIAGPIALEARQTALKTLRGAPVEVEIIVTDRKGNILARV.

It belongs to the CbiD family.

It catalyses the reaction Co-precorrin-5B + S-adenosyl-L-methionine = Co-precorrin-6A + S-adenosyl-L-homocysteine. It functions in the pathway cofactor biosynthesis; adenosylcobalamin biosynthesis; cob(II)yrinate a,c-diamide from sirohydrochlorin (anaerobic route): step 6/10. Its function is as follows. Catalyzes the methylation of C-1 in cobalt-precorrin-5B to form cobalt-precorrin-6A. The chain is Cobalt-precorrin-5B C(1)-methyltransferase from Brucella abortus (strain S19).